A 459-amino-acid polypeptide reads, in one-letter code: tRNA modification GTPase MnmE (459 aa).

Residues Arg-24, Glu-82, and Lys-122 each coordinate (6S)-5-formyl-5,6,7,8-tetrahydrofolate. Residues Gly-219–Lys-379 form the TrmE-type G domain. GTP is bound by residues Asn-229–Ser-234, Thr-248–Thr-254, and Asp-273–Gly-276. Positions 233 and 254 each coordinate Mg(2+). Residue Lys-459 participates in (6S)-5-formyl-5,6,7,8-tetrahydrofolate binding.

This sequence belongs to the TRAFAC class TrmE-Era-EngA-EngB-Septin-like GTPase superfamily. TrmE GTPase family. As to quaternary structure, homodimer. Heterotetramer of two MnmE and two MnmG subunits. Requires K(+) as cofactor.

The protein resides in the cytoplasm. Exhibits a very high intrinsic GTPase hydrolysis rate. Involved in the addition of a carboxymethylaminomethyl (cmnm) group at the wobble position (U34) of certain tRNAs, forming tRNA-cmnm(5)s(2)U34. This chain is tRNA modification GTPase MnmE, found in Buchnera aphidicola subsp. Baizongia pistaciae (strain Bp).